Here is a 1340-residue protein sequence, read N- to C-terminus: Iron-sulfur cluster assembly protein SufD (1340 aa).

The segment covering 477–487 (NSLKHNNNNTK) has biased composition (low complexity). 5 disordered regions span residues 477-498 (NSLK…ERSS), 723-743 (HGKD…NYLN), 765-794 (NVST…QSTV), 835-865 (EKNE…GEKK), and 992-1055 (NIPT…NNIQ). Positions 723–734 (HGKDNTQHDDKN) are enriched in basic and acidic residues. The span at 782–794 (NPDTETNNEQSTV) shows a compositional bias: polar residues. The segment covering 1022–1037 (DNLLQNDQATNSNVEI) has biased composition (polar residues).

It belongs to the iron-sulfur cluster assembly SufBD family. Component of a complex composed of SufB, SufC and SufD in a stoichiometric ratio of 1:2:1. Interacts with SufB. Interacts with SufC; the interaction enhances the ATPase activity of SufC.

It localises to the plastid. The protein resides in the apicoplast. It functions in the pathway cofactor biosynthesis; iron-sulfur cluster biosynthesis. Participates in the sulfur mobilization (SUF) pathway for iron-sulfur (Fe-S) cluster biogenesis. As part of a complex consisting of SufB-SufC(2)-SufD, involved in assembly of [4Fe-4S] clusters. Enhances the ATPase activity of SufC. In Plasmodium berghei (strain Anka), this protein is Iron-sulfur cluster assembly protein SufD.